The chain runs to 122 residues: Succinate dehydrogenase assembly factor 2, mitochondrial (122 aa).

This sequence belongs to the SDHAF2 family. As to quaternary structure, interacts with the flavoprotein subunit within the SDH catalytic dimer.

It is found in the mitochondrion matrix. In terms of biological role, plays an essential role in the assembly of succinate dehydrogenase (SDH), an enzyme complex (also referred to as respiratory complex II) that is a component of both the tricarboxylic acid (TCA) cycle and the mitochondrial electron transport chain, and which couples the oxidation of succinate to fumarate with the reduction of ubiquinone (coenzyme Q) to ubiquinol. Required for flavinylation (covalent attachment of FAD) of the flavoprotein subunit of the SDH catalytic dimer. This Caenorhabditis briggsae protein is Succinate dehydrogenase assembly factor 2, mitochondrial.